We begin with the raw amino-acid sequence, 524 residues long: Sexual development regulator velC (524 aa).

Disordered stretches follow at residues 114–195 (NRVL…PVHS), 322–349 (PGSG…MSSY), 380–413 (VDEE…HRFR), and 503–524 (GMGK…ARVE). 2 stretches are compositionally biased toward polar residues: residues 131-153 (TTGS…ENAG) and 178-195 (LDSQ…PVHS). The region spanning 248 to 500 (SSSSRYRLFI…ELGFVELKTR (253 aa)) is the Velvet domain. Residues 393–402 (PSSTDDSTYD) are compositionally biased toward polar residues.

The protein belongs to the velvet family. VelC subfamily. As to quaternary structure, interacts with vosA.

The protein localises to the nucleus. Functionally, velvet-domain-containing protein that acts as a positive regulator of sexual development. Positively regulates the production of the sexual fruiting bodies called cleistothecia. In Emericella nidulans (strain FGSC A4 / ATCC 38163 / CBS 112.46 / NRRL 194 / M139) (Aspergillus nidulans), this protein is Sexual development regulator velC.